Here is a 138-residue protein sequence, read N- to C-terminus: Acidic phospholipase A2 1 (138 aa).

A signal peptide spans 1–16; sequence MRTLWIMAVLLVGVDG. Cystine bridges form between cysteine 42-cysteine 131, cysteine 44-cysteine 60, cysteine 59-cysteine 110, cysteine 65-cysteine 138, cysteine 66-cysteine 103, cysteine 73-cysteine 97, and cysteine 91-cysteine 101. Ca(2+) contacts are provided by tyrosine 43, glycine 45, and glycine 47. Histidine 63 is an active-site residue. Aspartate 64 contacts Ca(2+). The active site involves aspartate 104.

It belongs to the phospholipase A2 family. Group II subfamily. D49 sub-subfamily. In terms of assembly, homodimer. The cofactor is Ca(2+). In terms of tissue distribution, expressed by the venom gland.

The protein localises to the secreted. It carries out the reaction a 1,2-diacyl-sn-glycero-3-phosphocholine + H2O = a 1-acyl-sn-glycero-3-phosphocholine + a fatty acid + H(+). Snake venom phospholipase A2 (PLA2) that is highly lipolytic and myolytic. PLA2 catalyzes the calcium-dependent hydrolysis of the 2-acyl groups in 3-sn-phosphoglycerides. In Protobothrops flavoviridis (Habu), this protein is Acidic phospholipase A2 1.